The following is a 516-amino-acid chain: Cysteine--tRNA ligase (516 aa).

Cysteine 32 provides a ligand contact to Zn(2+). The short motif at 34–44 (PTVYMYAHIGN) is the 'HIGH' region element. Zn(2+)-binding residues include cysteine 230, histidine 255, and glutamate 259. Residues 287–291 (KMSKS) carry the 'KMSKS' region motif. ATP is bound at residue lysine 290.

Belongs to the class-I aminoacyl-tRNA synthetase family. In terms of assembly, monomer. The cofactor is Zn(2+).

It is found in the cytoplasm. It carries out the reaction tRNA(Cys) + L-cysteine + ATP = L-cysteinyl-tRNA(Cys) + AMP + diphosphate. In Salinibacter ruber (strain DSM 13855 / M31), this protein is Cysteine--tRNA ligase.